A 342-amino-acid chain; its full sequence is L-lysine 2,3-aminomutase (342 aa).

The region spanning 106–329 (HKYQNRALLL…PRLAREIGGE (224 aa)) is the Radical SAM core domain. Residues cysteine 120, cysteine 124, and cysteine 127 each coordinate [4Fe-4S] cluster. At lysine 332 the chain carries N6-(pyridoxal phosphate)lysine.

Belongs to the radical SAM superfamily. KamA family. [4Fe-4S] cluster is required as a cofactor. It depends on pyridoxal 5'-phosphate as a cofactor.

The catalysed reaction is L-lysine = D-beta-lysine. Its function is as follows. With EpmA is involved in the beta-lysylation step of the post-translational modification of translation elongation factor P (EF-P) on 'Lys-34'. EpmB appears to act before EpmA. Displays lysine 2,3-aminomutase activity, producing (R)-beta-lysine from (S)-alpha-lysine (L-lysine). The sequence is that of L-lysine 2,3-aminomutase (epmB) from Salmonella typhimurium (strain LT2 / SGSC1412 / ATCC 700720).